The primary structure comprises 238 residues: MKVLAPLVLASAASAHTIFSSLEVNGVNQGLGEGVRVPTYNGPIEDVTSASIACNGSPNTVASTSKVITVQAGTNVTAIWRYMLSTTGDSPADVMDSSHKGPTIAYLKKVDNAATASGVGNGWFKIQQDGMDSSGVWGTERVINGKGRHSIKIPECIAPGQYLLRAEMIALHAASNYPGAQFYMECAQLNVVGGTGAKTPSTVSFPGAYSGSDPGVKISIYWPPVTSYTVPGPSVFTC.

Residues 1-15 (MKVLAPLVLASAASA) form the signal peptide. His16 lines the Cu(2+) pocket. Residue Glu45 participates in O2 binding. Disulfide bonds link Cys54/Cys186 and Cys156/Cys238. Residue Asn75 is glycosylated (N-linked (GlcNAc...) asparagine). His99 serves as a coordination point for Cu(2+). O2 is bound by residues His172 and Gln181. His172 (proton donor) is an active-site residue. Cu(2+) is bound at residue Tyr183.

This sequence belongs to the polysaccharide monooxygenase AA9 family. In terms of assembly, monomer. Requires Cu(2+) as cofactor. Post-translationally, N-linked glycans containing mannose and N-acetylglucosamine.

It localises to the secreted. The enzyme catalyses [(1-&gt;4)-beta-D-glucosyl]n+m + reduced acceptor + O2 = 4-dehydro-beta-D-glucosyl-[(1-&gt;4)-beta-D-glucosyl]n-1 + [(1-&gt;4)-beta-D-glucosyl]m + acceptor + H2O.. It participates in glycan metabolism; cellulose degradation. Inhibited by increasing levels of ascorbic acid. Its function is as follows. Catalyzes the oxidative cleavage of glycosidic bonds in cellulosic substrates via a copper-dependent mechanism. In the presence of an exogenous reductant ascorbic acid, degrades phosphoric acid swollen cellulose (PASC) to cello-oligosaccharides and 4-ketoaldoses, the end products oxidized at the non-reducing end. Somewhat active toward tamarind xyloglucan and konjac glucomannan, with improved activity with glucomannan in the presence of PASC. H(2)O(2) is able to substitute for O(2) in reactions with PASC, xyloglucan and glucomannan. Very weak activity on cellopentaose. No activity with birchwood xylan or ivory nut mannan. Disrupts plant cell wall polysaccharide substrates, such as recalcitrant crystalline cellulose. The protein is Lytic polysaccharide monooxygenase NCU01050 of Neurospora crassa (strain ATCC 24698 / 74-OR23-1A / CBS 708.71 / DSM 1257 / FGSC 987).